A 306-amino-acid chain; its full sequence is Homoserine O-acetyltransferase (306 aa).

Cys-142 functions as the Acyl-thioester intermediate in the catalytic mechanism. Residues Lys-163 and Ser-192 each contribute to the substrate site. His-235 serves as the catalytic Proton acceptor. The active site involves Glu-237. Substrate is bound at residue Arg-249.

The protein belongs to the MetA family.

It is found in the cytoplasm. The catalysed reaction is L-homoserine + acetyl-CoA = O-acetyl-L-homoserine + CoA. Its pathway is amino-acid biosynthesis; L-methionine biosynthesis via de novo pathway; O-acetyl-L-homoserine from L-homoserine: step 1/1. In terms of biological role, transfers an acetyl group from acetyl-CoA to L-homoserine, forming acetyl-L-homoserine. The sequence is that of Homoserine O-acetyltransferase from Clostridium botulinum (strain Alaska E43 / Type E3).